We begin with the raw amino-acid sequence, 209 residues long: Holliday junction branch migration complex subunit RuvA (209 aa).

The segment at 1-70 (MINYLRGQAI…EEQPLLYGFG (70 aa)) is domain I. The interval 71–149 (TAPERELFRQ…AWRQLREATT (79 aa)) is domain II. Residues 150–158 (TITAILPAA) form a flexible linker region. The interval 158-209 (AAILEDVQMTLLALGYSQEEIDRAMAVLSQDALFSKNTQPEDWIKGAINWLG) is domain III.

Belongs to the RuvA family. Homotetramer. Forms an RuvA(8)-RuvB(12)-Holliday junction (HJ) complex. HJ DNA is sandwiched between 2 RuvA tetramers; dsDNA enters through RuvA and exits via RuvB. An RuvB hexamer assembles on each DNA strand where it exits the tetramer. Each RuvB hexamer is contacted by two RuvA subunits (via domain III) on 2 adjacent RuvB subunits; this complex drives branch migration. In the full resolvosome a probable DNA-RuvA(4)-RuvB(12)-RuvC(2) complex forms which resolves the HJ.

The protein localises to the cytoplasm. Functionally, the RuvA-RuvB-RuvC complex processes Holliday junction (HJ) DNA during genetic recombination and DNA repair, while the RuvA-RuvB complex plays an important role in the rescue of blocked DNA replication forks via replication fork reversal (RFR). RuvA specifically binds to HJ cruciform DNA, conferring on it an open structure. The RuvB hexamer acts as an ATP-dependent pump, pulling dsDNA into and through the RuvAB complex. HJ branch migration allows RuvC to scan DNA until it finds its consensus sequence, where it cleaves and resolves the cruciform DNA. In Microcystis aeruginosa (strain NIES-843 / IAM M-2473), this protein is Holliday junction branch migration complex subunit RuvA.